The sequence spans 68 residues: MKGLLCFIYILSAILIGCVFLNKDVEAFTPYRNEPSHYQTVYESNSSYPKSSLDITGWSYQPSVDDVN.

The signal sequence occupies residues 1–27; sequence MKGLLCFIYILSAILIGCVFLNKDVEA.

This is an uncharacterized protein from Invertebrate iridescent virus 6 (IIV-6).